The primary structure comprises 470 residues: ATP synthase subunit beta (470 aa).

157 to 164 provides a ligand contact to ATP; the sequence is GGAGVGKT.

This sequence belongs to the ATPase alpha/beta chains family. In terms of assembly, F-type ATPases have 2 components, CF(1) - the catalytic core - and CF(0) - the membrane proton channel. CF(1) has five subunits: alpha(3), beta(3), gamma(1), delta(1), epsilon(1). CF(0) has three main subunits: a(1), b(2) and c(9-12). The alpha and beta chains form an alternating ring which encloses part of the gamma chain. CF(1) is attached to CF(0) by a central stalk formed by the gamma and epsilon chains, while a peripheral stalk is formed by the delta and b chains.

It is found in the cell inner membrane. It carries out the reaction ATP + H2O + 4 H(+)(in) = ADP + phosphate + 5 H(+)(out). Its function is as follows. Produces ATP from ADP in the presence of a proton gradient across the membrane. The catalytic sites are hosted primarily by the beta subunits. The sequence is that of ATP synthase subunit beta from Geotalea daltonii (strain DSM 22248 / JCM 15807 / FRC-32) (Geobacter daltonii).